A 252-amino-acid polypeptide reads, in one-letter code: Methylthioribulose-1-phosphate dehydratase (252 aa).

Cys105 lines the substrate pocket. Residues His123 and His125 each contribute to the Zn(2+) site. Glu151 functions as the Proton donor/acceptor in the catalytic mechanism. Residue His208 participates in Zn(2+) binding.

The protein belongs to the aldolase class II family. MtnB subfamily. Zn(2+) serves as cofactor.

The protein resides in the cytoplasm. It carries out the reaction 5-(methylsulfanyl)-D-ribulose 1-phosphate = 5-methylsulfanyl-2,3-dioxopentyl phosphate + H2O. Its pathway is amino-acid biosynthesis; L-methionine biosynthesis via salvage pathway; L-methionine from S-methyl-5-thio-alpha-D-ribose 1-phosphate: step 2/6. In terms of biological role, catalyzes the dehydration of methylthioribulose-1-phosphate (MTRu-1-P) into 2,3-diketo-5-methylthiopentyl-1-phosphate (DK-MTP-1-P). The protein is Methylthioribulose-1-phosphate dehydratase of Sclerotinia sclerotiorum (strain ATCC 18683 / 1980 / Ss-1) (White mold).